Here is a 244-residue protein sequence, read N- to C-terminus: MDKSELVQKAKLAEQAERYDDMAAAMKAVTEQGHELSNEERNLLSVAYKNVVGARRSSWRVISSIEQKTERNEKKQQMGREYREKIEAELQDICNDVLELLDKYLIVNATQPESKVFYLKMKGDYYRYLSEVASGDNKQTTVANSQQAYQEAFEISKKEMQPTHPIRLGLALNFSVFYYEILNSPEKACNLAKTAFDEAIAELDTLNEESYKDSTLIMQLLRDNLTLWTSENQGDEGDAGEGEN.

M1 bears the N-acetylmethionine mark. Phosphoserine is present on S184.

The protein belongs to the 14-3-3 family. As to quaternary structure, homodimer, and heterodimer with other family members. Phosphorylated.

It is found in the cytoplasm. Functionally, adapter protein implicated in the regulation of a large spectrum of both general and specialized signaling pathways. Binds to a large number of partners, usually by recognition of a phosphoserine or phosphothreonine motif. Binding generally results in the modulation of the activity of the binding partner. This is 14-3-3 protein beta/alpha (YWHAB) from Gallus gallus (Chicken).